Reading from the N-terminus, the 339-residue chain is 3-isopropylmalate dehydrogenase (339 aa).

Substrate-binding residues include Arg87, Arg97, Arg124, and Asp214. Positions 214, 238, and 242 each coordinate Mg(2+). 274–286 (GSAPDIAGQGIAD) contributes to the NAD(+) binding site.

Belongs to the isocitrate and isopropylmalate dehydrogenases family. LeuB type 2 subfamily. As to quaternary structure, homodimer. Requires Mg(2+) as cofactor. Mn(2+) serves as cofactor.

The protein localises to the cytoplasm. It catalyses the reaction (2R,3S)-3-isopropylmalate + NAD(+) = 4-methyl-2-oxopentanoate + CO2 + NADH. It participates in amino-acid biosynthesis; L-leucine biosynthesis; L-leucine from 3-methyl-2-oxobutanoate: step 3/4. In terms of biological role, catalyzes the oxidation of 3-carboxy-2-hydroxy-4-methylpentanoate (3-isopropylmalate) to 3-carboxy-4-methyl-2-oxopentanoate. The product decarboxylates to 4-methyl-2 oxopentanoate. The sequence is that of 3-isopropylmalate dehydrogenase from Mycobacterium ulcerans (strain Agy99).